The following is a 313-amino-acid chain: Acetyl-coenzyme A carboxylase carboxyl transferase subunit alpha (313 aa).

Positions 30–291 (DLDREISDLE…KMALLQELAF (262 aa)) constitute a CoA carboxyltransferase C-terminal domain.

It belongs to the AccA family. As to quaternary structure, acetyl-CoA carboxylase is a heterohexamer composed of biotin carboxyl carrier protein (AccB), biotin carboxylase (AccC) and two subunits each of ACCase subunit alpha (AccA) and ACCase subunit beta (AccD).

The protein localises to the cytoplasm. The catalysed reaction is N(6)-carboxybiotinyl-L-lysyl-[protein] + acetyl-CoA = N(6)-biotinyl-L-lysyl-[protein] + malonyl-CoA. The protein operates within lipid metabolism; malonyl-CoA biosynthesis; malonyl-CoA from acetyl-CoA: step 1/1. Component of the acetyl coenzyme A carboxylase (ACC) complex. First, biotin carboxylase catalyzes the carboxylation of biotin on its carrier protein (BCCP) and then the CO(2) group is transferred by the carboxyltransferase to acetyl-CoA to form malonyl-CoA. The chain is Acetyl-coenzyme A carboxylase carboxyl transferase subunit alpha from Zymomonas mobilis subsp. mobilis (strain ATCC 31821 / ZM4 / CP4).